A 104-amino-acid polypeptide reads, in one-letter code: Large ribosomal subunit protein uL24 (104 aa).

It belongs to the universal ribosomal protein uL24 family. Part of the 50S ribosomal subunit.

Its function is as follows. One of two assembly initiator proteins, it binds directly to the 5'-end of the 23S rRNA, where it nucleates assembly of the 50S subunit. One of the proteins that surrounds the polypeptide exit tunnel on the outside of the subunit. The protein is Large ribosomal subunit protein uL24 of Shewanella oneidensis (strain ATCC 700550 / JCM 31522 / CIP 106686 / LMG 19005 / NCIMB 14063 / MR-1).